The chain runs to 96 residues: UPF0235 protein CAB243 (96 aa).

Belongs to the UPF0235 family.

This chain is UPF0235 protein CAB243, found in Chlamydia abortus (strain DSM 27085 / S26/3) (Chlamydophila abortus).